A 449-amino-acid polypeptide reads, in one-letter code: Elongation factor 1-alpha (449 aa).

Positions 5–230 constitute a tr-type G domain; sequence KVHINIVVIG…DQINEPKRPS (226 aa). The tract at residues 14-21 is G1; that stretch reads GHVDSGKS. 14-21 serves as a coordination point for GTP; that stretch reads GHVDSGKS. Residue Lys-55 is modified to N6,N6-dimethyllysine. A G2 region spans residues 70–74; that stretch reads GITID. Lys-79 bears the N6,N6,N6-trimethyllysine mark. Residues 91-94 form a G3 region; that stretch reads DAPG. Residues 91–95 and 153–156 each bind GTP; these read DAPGH and NKMD. The G4 stretch occupies residues 153-156; the sequence is NKMD. The residue at position 187 (Lys-187) is an N6,N6,N6-trimethyllysine. Residues 194–196 are G5; sequence SGF. Lys-261 is modified (N6-methyllysine). Residue Glu-289 is modified to 5-glutamyl glycerylphosphorylethanolamine. Residue Lys-306 is modified to N6,N6,N6-trimethyllysine. At Glu-362 the chain carries 5-glutamyl glycerylphosphorylethanolamine. Position 396 is an N6,N6,N6-trimethyllysine (Lys-396).

This sequence belongs to the TRAFAC class translation factor GTPase superfamily. Classic translation factor GTPase family. EF-Tu/EF-1A subfamily.

It is found in the cytoplasm. In terms of biological role, this protein promotes the GTP-dependent binding of aminoacyl-tRNA to the A-site of ribosomes during protein biosynthesis. This Daucus carota (Wild carrot) protein is Elongation factor 1-alpha.